Here is a 229-residue protein sequence, read N- to C-terminus: 2-C-methyl-D-erythritol 4-phosphate cytidylyltransferase (229 aa).

It belongs to the IspD/TarI cytidylyltransferase family. IspD subfamily.

The catalysed reaction is 2-C-methyl-D-erythritol 4-phosphate + CTP + H(+) = 4-CDP-2-C-methyl-D-erythritol + diphosphate. Its pathway is isoprenoid biosynthesis; isopentenyl diphosphate biosynthesis via DXP pathway; isopentenyl diphosphate from 1-deoxy-D-xylulose 5-phosphate: step 2/6. In terms of biological role, catalyzes the formation of 4-diphosphocytidyl-2-C-methyl-D-erythritol from CTP and 2-C-methyl-D-erythritol 4-phosphate (MEP). This chain is 2-C-methyl-D-erythritol 4-phosphate cytidylyltransferase, found in Clostridium botulinum (strain Okra / Type B1).